The following is a 253-amino-acid chain: Core protein VP8 (253 aa).

A propeptide spanning residues 1–31 (MNDLLLENLFGEKALCAQVTRDQLLEIIAAG) is cleaved from the precursor.

The protein belongs to the chordopoxvirinae VP8 family. Undergoes morphogenesis-associated proteolysis which cleaves the 28 kDa to a 25-kDa product. Proteolytic cleavage of major core proteins P4a (A10L), P4b (A3L), and VP8 (L4R), which occurs at a late stage of core formation, is required for production of infectious mature virions (MV).

It is found in the virion. Its function is as follows. Major core structural protein. In Vertebrata (FPV), this protein is Core protein VP8.